The sequence spans 109 residues: MSEQRDILKALAEVLEERRQADPATSYVAKLHHKGLDAILKKVGEEATEAVVAAKGGDRSQVIYETADLWFHSLIMLSACDAGPDDVLAELERRFGLSGIDEKAARNGQ.

The protein belongs to the PRA-PH family.

The protein localises to the cytoplasm. It catalyses the reaction 1-(5-phospho-beta-D-ribosyl)-ATP + H2O = 1-(5-phospho-beta-D-ribosyl)-5'-AMP + diphosphate + H(+). The protein operates within amino-acid biosynthesis; L-histidine biosynthesis; L-histidine from 5-phospho-alpha-D-ribose 1-diphosphate: step 2/9. The protein is Phosphoribosyl-ATP pyrophosphatase of Alkalilimnicola ehrlichii (strain ATCC BAA-1101 / DSM 17681 / MLHE-1).